The chain runs to 332 residues: Ketol-acid reductoisomerase (NADP(+)) (332 aa).

Positions 2–182 constitute a KARI N-terminal Rossmann domain; that stretch reads ANIYYDEDAS…GATRAGLIET (181 aa). NADP(+)-binding positions include 25–28, Ser51, Ser53, and 83–86; these read YGSQ and DTVQ. His108 is a catalytic residue. NADP(+) is bound at residue Gly134. In terms of domain architecture, KARI C-terminal knotted spans 183–327; that stretch reads TFKEETETDL…KELRKMMPWL (145 aa). Mg(2+) contacts are provided by Asp191, Glu195, Glu227, and Glu231. Residue Ser252 coordinates substrate.

Belongs to the ketol-acid reductoisomerase family. The cofactor is Mg(2+).

It catalyses the reaction (2R)-2,3-dihydroxy-3-methylbutanoate + NADP(+) = (2S)-2-acetolactate + NADPH + H(+). The catalysed reaction is (2R,3R)-2,3-dihydroxy-3-methylpentanoate + NADP(+) = (S)-2-ethyl-2-hydroxy-3-oxobutanoate + NADPH + H(+). It participates in amino-acid biosynthesis; L-isoleucine biosynthesis; L-isoleucine from 2-oxobutanoate: step 2/4. Its pathway is amino-acid biosynthesis; L-valine biosynthesis; L-valine from pyruvate: step 2/4. Its function is as follows. Involved in the biosynthesis of branched-chain amino acids (BCAA). Catalyzes an alkyl-migration followed by a ketol-acid reduction of (S)-2-acetolactate (S2AL) to yield (R)-2,3-dihydroxy-isovalerate. In the isomerase reaction, S2AL is rearranged via a Mg-dependent methyl migration to produce 3-hydroxy-3-methyl-2-ketobutyrate (HMKB). In the reductase reaction, this 2-ketoacid undergoes a metal-dependent reduction by NADPH to yield (R)-2,3-dihydroxy-isovalerate. The protein is Ketol-acid reductoisomerase (NADP(+)) of Sulfurihydrogenibium sp. (strain YO3AOP1).